A 372-amino-acid chain; its full sequence is Queuine tRNA-ribosyltransferase (372 aa).

Aspartate 89 serves as the catalytic Proton acceptor. Substrate is bound by residues aspartate 89 to phenylalanine 93, aspartate 161, and glycine 232. The segment at glycine 262–serine 268 is RNA binding. Residue aspartate 281 is the Nucleophile of the active site. Residues threonine 286–arginine 290 are RNA binding; important for wobble base 34 recognition. Zn(2+) contacts are provided by cysteine 319, cysteine 321, cysteine 324, and histidine 351.

It belongs to the queuine tRNA-ribosyltransferase family. In terms of assembly, homodimer. Within each dimer, one monomer is responsible for RNA recognition and catalysis, while the other monomer binds to the replacement base PreQ1. The cofactor is Zn(2+).

It catalyses the reaction 7-aminomethyl-7-carbaguanine + guanosine(34) in tRNA = 7-aminomethyl-7-carbaguanosine(34) in tRNA + guanine. Its pathway is tRNA modification; tRNA-queuosine biosynthesis. Catalyzes the base-exchange of a guanine (G) residue with the queuine precursor 7-aminomethyl-7-deazaguanine (PreQ1) at position 34 (anticodon wobble position) in tRNAs with GU(N) anticodons (tRNA-Asp, -Asn, -His and -Tyr). Catalysis occurs through a double-displacement mechanism. The nucleophile active site attacks the C1' of nucleotide 34 to detach the guanine base from the RNA, forming a covalent enzyme-RNA intermediate. The proton acceptor active site deprotonates the incoming PreQ1, allowing a nucleophilic attack on the C1' of the ribose to form the product. After dissociation, two additional enzymatic reactions on the tRNA convert PreQ1 to queuine (Q), resulting in the hypermodified nucleoside queuosine (7-(((4,5-cis-dihydroxy-2-cyclopenten-1-yl)amino)methyl)-7-deazaguanosine). In Chlamydia pneumoniae (Chlamydophila pneumoniae), this protein is Queuine tRNA-ribosyltransferase.